The primary structure comprises 251 residues: Sec-independent protein translocase protein TatC (251 aa).

A run of 6 helical transmembrane segments spans residues 23-43, 73-93, 104-124, 159-179, 197-217, and 218-238; these read AFII…SFLL, SAFT…YLFI, IIAF…IFVF, LVIH…VIIV, IAVV…ILSQ, and FALA…CNFI.

This sequence belongs to the TatC family. As to quaternary structure, the Tat system comprises two distinct complexes: a TatABC complex, containing multiple copies of TatA, TatB and TatC subunits, and a separate TatA complex, containing only TatA subunits. Substrates initially bind to the TatABC complex, which probably triggers association of the separate TatA complex to form the active translocon.

It localises to the cell inner membrane. Part of the twin-arginine translocation (Tat) system that transports large folded proteins containing a characteristic twin-arginine motif in their signal peptide across membranes. Together with TatB, TatC is part of a receptor directly interacting with Tat signal peptides. This Rickettsia prowazekii (strain Madrid E) protein is Sec-independent protein translocase protein TatC.